We begin with the raw amino-acid sequence, 201 residues long: 3-isopropylmalate dehydratase small subunit (201 aa).

The protein belongs to the LeuD family. LeuD type 1 subfamily. As to quaternary structure, heterodimer of LeuC and LeuD.

The enzyme catalyses (2R,3S)-3-isopropylmalate = (2S)-2-isopropylmalate. It functions in the pathway amino-acid biosynthesis; L-leucine biosynthesis; L-leucine from 3-methyl-2-oxobutanoate: step 2/4. Catalyzes the isomerization between 2-isopropylmalate and 3-isopropylmalate, via the formation of 2-isopropylmaleate. The chain is 3-isopropylmalate dehydratase small subunit from Escherichia coli O157:H7.